Here is a 109-residue protein sequence, read N- to C-terminus: Movement protein TGB2 (109 aa).

Over 1–9 (MPLQPPPDH) the chain is Cytoplasmic. The chain crosses the membrane as a helical span at residues 10-30 (TWAVRIIALGLAVTALIFTST). At 31–71 (RDTSRHVGDPSHSLPFGGHYRDGSKVIHYNSPRSSKPSNHT) the chain is on the lumenal side. A helical transmembrane segment spans residues 72–92 (PYLLFAPIGIILLIHALHRLG). The Cytoplasmic portion of the chain corresponds to 93 to 109 (NSAHICRCTHCMPHSQT).

The protein belongs to the Tymovirales TGBp2 protein family.

Its subcellular location is the host endoplasmic reticulum membrane. Functionally, plays a role in viral cell-to-cell propagation, by facilitating genome transport to neighboring plant cells through plasmosdesmata,. This Citrus (ICRSV) protein is Movement protein TGB2.